The sequence spans 448 residues: tRNA-2-methylthio-N(6)-dimethylallyladenosine synthase (448 aa).

In terms of domain architecture, MTTase N-terminal spans 3–119 (GRVYVKTHGC…LPEMIDRARD (117 aa)). Residues C12, C49, C82, C156, C160, and C163 each contribute to the [4Fe-4S] cluster site. In terms of domain architecture, Radical SAM core spans 142–374 (RAEGPTAFVS…QETINANARR (233 aa)). Positions 377 to 440 (ESMVGTVQRV…PNSLRGELLG (64 aa)) constitute a TRAM domain.

Belongs to the methylthiotransferase family. MiaB subfamily. Monomer. It depends on [4Fe-4S] cluster as a cofactor.

Its subcellular location is the cytoplasm. It catalyses the reaction N(6)-dimethylallyladenosine(37) in tRNA + (sulfur carrier)-SH + AH2 + 2 S-adenosyl-L-methionine = 2-methylsulfanyl-N(6)-dimethylallyladenosine(37) in tRNA + (sulfur carrier)-H + 5'-deoxyadenosine + L-methionine + A + S-adenosyl-L-homocysteine + 2 H(+). Functionally, catalyzes the methylthiolation of N6-(dimethylallyl)adenosine (i(6)A), leading to the formation of 2-methylthio-N6-(dimethylallyl)adenosine (ms(2)i(6)A) at position 37 in tRNAs that read codons beginning with uridine. This Alkalilimnicola ehrlichii (strain ATCC BAA-1101 / DSM 17681 / MLHE-1) protein is tRNA-2-methylthio-N(6)-dimethylallyladenosine synthase.